The following is a 617-amino-acid chain: MKQSKMPIPTLREMPSDAQVISHALMLRAGYVRQVSAGVYSYLPLANRVIEKAKNIMRQEFEKIGAVEMLAPALLSAELWRESGRYETYGEDLYKLKNREKSDFILGPTHEETFTAIVRDSVKSYKQLPLNLYQIQPKYRDEKRPRNGLLRTREFIMKDAYSFHANYDSLDSVYDEYKAAYERIFTRSGLDFKAIIGDGGAMGGKDSQEFMAITSARTALDRWVVLDKSVVSFDEIPAEVQEEIKAELLKWIVSGEDTIAYSSESSYAANLEMATNEYKPSNRVVAEEEVTRVATPDVKSIDEVAAFLNVPEEQTIKTLFYIADGELVAALLVGNDQLNEVKLKNHLGADFFDVASEEEVANVVQAGFGSLGPVGLPENIKIIADRKVQDVRNAVVGANEDGYHLTGVNPGRDFTAEYVDIREVREGEISPDGQGVLNFARGIEIGHIFKLGTRYSASMGADVLDENGRAVPIIMGCYGIGVSRLLSAVMEQHARLFVNKTPKGEYRYAWGINFPKELAPFDVHLITVNVKDEEAQALTEKLEASLMGAGYEVLTDDRNERVGVKFSDSDLIGLPIRITVGKKATDGIVEVKIKATGDTIEVHADNVLETLEILSKK.

It belongs to the class-II aminoacyl-tRNA synthetase family. ProS type 1 subfamily. As to quaternary structure, homodimer.

The protein resides in the cytoplasm. It catalyses the reaction tRNA(Pro) + L-proline + ATP = L-prolyl-tRNA(Pro) + AMP + diphosphate. Its function is as follows. Catalyzes the attachment of proline to tRNA(Pro) in a two-step reaction: proline is first activated by ATP to form Pro-AMP and then transferred to the acceptor end of tRNA(Pro). As ProRS can inadvertently accommodate and process non-cognate amino acids such as alanine and cysteine, to avoid such errors it has two additional distinct editing activities against alanine. One activity is designated as 'pretransfer' editing and involves the tRNA(Pro)-independent hydrolysis of activated Ala-AMP. The other activity is designated 'posttransfer' editing and involves deacylation of mischarged Ala-tRNA(Pro). The misacylated Cys-tRNA(Pro) is not edited by ProRS. The sequence is that of Proline--tRNA ligase from Streptococcus pneumoniae (strain CGSP14).